A 750-amino-acid polypeptide reads, in one-letter code: Photosystem I P700 chlorophyll a apoprotein A1 (750 aa).

Transmembrane regions (helical) follow at residues 70–93 (VFSA…FHGA), 156–179 (LYCT…FHYH), 195–219 (LNHH…HVSL), 291–309 (IAHH…GHMY), 346–369 (WHAQ…HHMY), 385–411 (LSLF…IFMV), 433–455 (AIIS…LYIH), and 531–549 (FLVH…LILL). Residues C573 and C582 each coordinate [4Fe-4S] cluster. A run of 2 helical transmembrane segments spans residues 589 to 610 (HVFL…HFSW) and 664 to 686 (LSAY…MFLF). H675 is a binding site for chlorophyll a'. Residues M683 and Y691 each coordinate chlorophyll a. Position 692 (W692) interacts with phylloquinone. The chain crosses the membrane as a helical span at residues 724–744 (AVGVTHYLLGGIATTWAFFLA).

This sequence belongs to the PsaA/PsaB family. In terms of assembly, the PsaA/B heterodimer binds the P700 chlorophyll special pair and subsequent electron acceptors. PSI consists of a core antenna complex that captures photons, and an electron transfer chain that converts photonic excitation into a charge separation. The eukaryotic PSI reaction center is composed of at least 11 subunits. The cofactor is P700 is a chlorophyll a/chlorophyll a' dimer, A0 is one or more chlorophyll a, A1 is one or both phylloquinones and FX is a shared 4Fe-4S iron-sulfur center..

It localises to the plastid. The protein resides in the chloroplast thylakoid membrane. It carries out the reaction reduced [plastocyanin] + hnu + oxidized [2Fe-2S]-[ferredoxin] = oxidized [plastocyanin] + reduced [2Fe-2S]-[ferredoxin]. Its function is as follows. PsaA and PsaB bind P700, the primary electron donor of photosystem I (PSI), as well as the electron acceptors A0, A1 and FX. PSI is a plastocyanin-ferredoxin oxidoreductase, converting photonic excitation into a charge separation, which transfers an electron from the donor P700 chlorophyll pair to the spectroscopically characterized acceptors A0, A1, FX, FA and FB in turn. Oxidized P700 is reduced on the lumenal side of the thylakoid membrane by plastocyanin. The chain is Photosystem I P700 chlorophyll a apoprotein A1 from Pelargonium hortorum (Common geranium).